The primary structure comprises 386 residues: Dual-specificity RNA methyltransferase RlmN (386 aa).

Glutamate 94 acts as the Proton acceptor in catalysis. The region spanning 100–341 (EENRGTLCIS…VTTIRKTRGD (242 aa)) is the Radical SAM core domain. Cysteines 107 and 347 form a disulfide. 3 residues coordinate [4Fe-4S] cluster: cysteine 114, cysteine 118, and cysteine 121. S-adenosyl-L-methionine is bound by residues 173 to 174 (GE), serine 205, 227 to 229 (SLH), and asparagine 304. Cysteine 347 acts as the S-methylcysteine intermediate in catalysis.

It belongs to the radical SAM superfamily. RlmN family. [4Fe-4S] cluster is required as a cofactor.

It is found in the cytoplasm. It catalyses the reaction adenosine(2503) in 23S rRNA + 2 reduced [2Fe-2S]-[ferredoxin] + 2 S-adenosyl-L-methionine = 2-methyladenosine(2503) in 23S rRNA + 5'-deoxyadenosine + L-methionine + 2 oxidized [2Fe-2S]-[ferredoxin] + S-adenosyl-L-homocysteine. The catalysed reaction is adenosine(37) in tRNA + 2 reduced [2Fe-2S]-[ferredoxin] + 2 S-adenosyl-L-methionine = 2-methyladenosine(37) in tRNA + 5'-deoxyadenosine + L-methionine + 2 oxidized [2Fe-2S]-[ferredoxin] + S-adenosyl-L-homocysteine. Its function is as follows. Specifically methylates position 2 of adenine 2503 in 23S rRNA and position 2 of adenine 37 in tRNAs. m2A2503 modification seems to play a crucial role in the proofreading step occurring at the peptidyl transferase center and thus would serve to optimize ribosomal fidelity. This chain is Dual-specificity RNA methyltransferase RlmN, found in Herminiimonas arsenicoxydans.